The following is an 875-amino-acid chain: Alanine--tRNA ligase (875 aa).

Positions 564, 568, 666, and 670 each coordinate Zn(2+).

The protein belongs to the class-II aminoacyl-tRNA synthetase family. As to quaternary structure, homotetramer. It depends on Zn(2+) as a cofactor.

The protein localises to the cytoplasm. It catalyses the reaction tRNA(Ala) + L-alanine + ATP = L-alanyl-tRNA(Ala) + AMP + diphosphate. Functionally, catalyzes the attachment of alanine to tRNA(Ala) in a two-step reaction: alanine is first activated by ATP to form Ala-AMP and then transferred to the acceptor end of tRNA(Ala). Also edits incorrectly charged Ser-tRNA(Ala) and Gly-tRNA(Ala) via its editing domain. The sequence is that of Alanine--tRNA ligase from Yersinia enterocolitica serotype O:8 / biotype 1B (strain NCTC 13174 / 8081).